A 207-amino-acid chain; its full sequence is Anthranilate synthase component II (207 aa).

A Glutamine amidotransferase type-1 domain is found at 17–207 (RVLFVDNFDS…DVIRNFLAGL (191 aa)). 66–68 (GPG) serves as a coordination point for L-glutamine. The active-site Nucleophile; for GATase activity is Cys-96. 146–147 (SL) contacts L-glutamine. Active-site residues include His-187 and Glu-189.

In terms of assembly, tetramer of two components I and two components II.

The enzyme catalyses chorismate + L-glutamine = anthranilate + pyruvate + L-glutamate + H(+). It participates in amino-acid biosynthesis; L-tryptophan biosynthesis; L-tryptophan from chorismate: step 1/5. The chain is Anthranilate synthase component II (trpG1) from Haloarcula marismortui (strain ATCC 43049 / DSM 3752 / JCM 8966 / VKM B-1809) (Halobacterium marismortui).